The primary structure comprises 314 residues: Homeobox protein DBX1-A (314 aa).

Positions G175–K234 form a DNA-binding region, homeobox. Disordered stretches follow at residues K234–S279 and S292–S314. The segment covering D258–S267 has biased composition (basic and acidic residues). Over residues S305 to S314 the composition is skewed to acidic residues.

It belongs to the H2.0 homeobox family.

Its subcellular location is the nucleus. This is Homeobox protein DBX1-A (dbx1a) from Danio rerio (Zebrafish).